A 338-amino-acid chain; its full sequence is Cytochrome f (338 aa).

A signal peptide spans 1-45 (MNFKVCSFPSRRQSIAAFVRVLMVILLTLGALVSSDVLLPQPAAA). Heme-binding residues include Y46, C66, C69, and H70. Residues 300–316 (IAFLAAITLTQILLVLK) traverse the membrane as a helical segment.

Belongs to the cytochrome f family. In terms of assembly, the 4 large subunits of the cytochrome b6-f complex are cytochrome b6, subunit IV (17 kDa polypeptide, PetD), cytochrome f and the Rieske protein, while the 4 small subunits are PetG, PetL, PetM and PetN. The complex functions as a dimer. Heme serves as cofactor.

The protein localises to the cellular thylakoid membrane. Component of the cytochrome b6-f complex, which mediates electron transfer between photosystem II (PSII) and photosystem I (PSI), cyclic electron flow around PSI, and state transitions. In Leptolyngbya laminosa (Phormidium laminosum), this protein is Cytochrome f (petA).